The chain runs to 331 residues: MKQIIYITLAKNQEIEVWKLHDDFSLNLLQRISTQGEPQPIIISKDKKYLYIGVRPKFKVYSYKIKADGTLTKHACSTLPGSPNHFEIDHTGKYLFSSSYHFNCLSITPLDTLGIPRPVTQTIKNIFGCHASKMNCYNTCLFISALKKDCIYAYNFKKNGKLLKNTRKNFMTNVNFGPRHLDLQKCNNRLYSVNELNGSVDIWSINSFSNELILLKNINIMSKNYCNAAWSSDLHISPCEKFLYVSDRIENTISIIKLEKDVQNIEKIGHIKTELQPRTFSINSTGENLIVVGEKSNSFSVYKISKITGLLELKNTYSTGNRPVWISSLML.

This sequence belongs to the cycloisomerase 2 family.

The enzyme catalyses 6-phospho-D-glucono-1,5-lactone + H2O = 6-phospho-D-gluconate + H(+). It functions in the pathway carbohydrate degradation; pentose phosphate pathway; D-ribulose 5-phosphate from D-glucose 6-phosphate (oxidative stage): step 2/3. In terms of biological role, catalyzes the hydrolysis of 6-phosphogluconolactone to 6-phosphogluconate. The chain is 6-phosphogluconolactonase from Buchnera aphidicola subsp. Baizongia pistaciae (strain Bp).